The sequence spans 163 residues: MRAVIQKTVGAKVDVVSENGTETCGKIDGGFVVLLGVTHSDIEKDARYVADKIAHLRVFEDGEGKLNLSLKDVGGSVLLVSQFTLYADAASGRRPSFSKAAPAEQAKRLYLHTAELLRGHGIHVETGRFRTHMQVSLCNDGPVTILLDSFMTRISPKMKVVPD.

A Gly-cisPro motif, important for rejection of L-amino acids motif is present at residues G141–P142.

Belongs to the DTD family. Homodimer.

Its subcellular location is the cytoplasm. The catalysed reaction is glycyl-tRNA(Ala) + H2O = tRNA(Ala) + glycine + H(+). It carries out the reaction a D-aminoacyl-tRNA + H2O = a tRNA + a D-alpha-amino acid + H(+). Its function is as follows. An aminoacyl-tRNA editing enzyme that deacylates mischarged D-aminoacyl-tRNAs. Also deacylates mischarged glycyl-tRNA(Ala), protecting cells against glycine mischarging by AlaRS. Acts via tRNA-based rather than protein-based catalysis; rejects L-amino acids rather than detecting D-amino acids in the active site. By recycling D-aminoacyl-tRNA to D-amino acids and free tRNA molecules, this enzyme counteracts the toxicity associated with the formation of D-aminoacyl-tRNA entities in vivo and helps enforce protein L-homochirality. This Neisseria meningitidis serogroup A / serotype 4A (strain DSM 15465 / Z2491) protein is D-aminoacyl-tRNA deacylase.